The following is an 831-amino-acid chain: Periplasmic nitrate reductase (831 aa).

Positions 1-29 (MTVTRRDFVRHQALATAAAAAGVAVPAAA) form a signal peptide, tat-type signal. The region spanning 41–97 (LVWSKAPCRFCGTGCSVNVATKEGRVVATHGDIKSPVNRGLNCVKGYFLSKVMYGED) is the 4Fe-4S Mo/W bis-MGD-type domain. [4Fe-4S] cluster contacts are provided by Cys48, Cys51, Cys55, and Cys83. Mo-bis(molybdopterin guanine dinucleotide)-binding positions include Lys85, Gln152, Asn177, Cys181, 214–221 (WGSNMAEM), 245–249 (STYEH), 264–266 (QSD), Met375, Gln379, Asn485, 511–512 (SD), Lys534, Asp561, and 721–730 (TGRVIEHWHS). Trp797 provides a ligand contact to substrate. Mo-bis(molybdopterin guanine dinucleotide) is bound by residues Asn805 and Lys822.

It belongs to the prokaryotic molybdopterin-containing oxidoreductase family. NasA/NapA/NarB subfamily. In terms of assembly, component of the periplasmic nitrate reductase NapAB complex composed of NapA and NapB. [4Fe-4S] cluster serves as cofactor. It depends on Mo-bis(molybdopterin guanine dinucleotide) as a cofactor. In terms of processing, predicted to be exported by the Tat system. The position of the signal peptide cleavage has not been experimentally proven.

The protein resides in the periplasm. The catalysed reaction is 2 Fe(II)-[cytochrome] + nitrate + 2 H(+) = 2 Fe(III)-[cytochrome] + nitrite + H2O. Functionally, catalytic subunit of the periplasmic nitrate reductase complex NapAB. Receives electrons from NapB and catalyzes the reduction of nitrate to nitrite. In Saccharophagus degradans (strain 2-40 / ATCC 43961 / DSM 17024), this protein is Periplasmic nitrate reductase.